A 642-amino-acid polypeptide reads, in one-letter code: Threonine--tRNA ligase (642 aa).

Residues 1 to 61 (MPVITLPDGS…ETDAELSIIT (61 aa)) form the TGS domain. The interval 243-534 (DHRKIGKQLD…LIEEYAGRFP (292 aa)) is catalytic. Positions 334, 385, and 511 each coordinate Zn(2+).

It belongs to the class-II aminoacyl-tRNA synthetase family. As to quaternary structure, homodimer. Requires Zn(2+) as cofactor.

Its subcellular location is the cytoplasm. It catalyses the reaction tRNA(Thr) + L-threonine + ATP = L-threonyl-tRNA(Thr) + AMP + diphosphate + H(+). In terms of biological role, catalyzes the attachment of threonine to tRNA(Thr) in a two-step reaction: L-threonine is first activated by ATP to form Thr-AMP and then transferred to the acceptor end of tRNA(Thr). Also edits incorrectly charged L-seryl-tRNA(Thr). This is Threonine--tRNA ligase from Shewanella putrefaciens (strain CN-32 / ATCC BAA-453).